Consider the following 141-residue polypeptide: ATP synthase epsilon chain (141 aa).

The protein belongs to the ATPase epsilon chain family. As to quaternary structure, F-type ATPases have 2 components, CF(1) - the catalytic core - and CF(0) - the membrane proton channel. CF(1) has five subunits: alpha(3), beta(3), gamma(1), delta(1), epsilon(1). CF(0) has three main subunits: a, b and c.

The protein resides in the cell inner membrane. Functionally, produces ATP from ADP in the presence of a proton gradient across the membrane. The sequence is that of ATP synthase epsilon chain from Burkholderia mallei (strain NCTC 10247).